The primary structure comprises 426 residues: uncharacterized protein (426 aa).

A disordered region spans residues 23–42; that stretch reads ENPRPTNNPSTSHPSDSYST. Polar residues predominate over residues 26 to 42; that stretch reads RPTNNPSTSHPSDSYST.

The protein belongs to the serpin family.

This is an uncharacterized protein from Thermococcus kodakarensis (strain ATCC BAA-918 / JCM 12380 / KOD1) (Pyrococcus kodakaraensis (strain KOD1)).